A 2283-amino-acid polypeptide reads, in one-letter code: MSKRQKAFHDSLANEKTRVRLYKSGKNWVKSGIKEIEMFKIMGLPFISHRIVSQDNQSISKKMTGYGLKTTAVIGGAFTVNMLHDQQAFAASDAPLTSELNTQSETVGNQNSTTIEASTSTADSTSVTKNSSSVQTSNSDTVSSEKSENVTSTTNSTSNQQEKLTSTSESTSSKNTTSSSDTKSVASTSSTEQPINTSTNQSTASNNTSQSTTPSSANLNKTSTTSTSTAPVKLRTFSRLAMSTFASAATTTAVTANTITVNKDNLKQYMTASGNATYDQSTGIVTLTQDAYSQKGAITLGTRIDSNKSFHFSGKVNLGNKYEGHGNGGDGIGFAFSPGVLGETGLNGAAVGIGGLSNAFGFKLDTYHNTSTPNASAKAKADPSSVAGGGAFGAFVTTDSYGVASTYTSSSAADNAAKLNVQPTNNAFQDFDINYNGDTKVMTVTYAGQTWTRNISDWIAKSGTTNFSLSMTASTGGATNLQQVQFGTFEYTESAVTQVRYVDVTTGKDIIPPKTYSGNVDQVVTIDNQQSALTAKGYNYTSVDSSYASTYNDTNKTVKMTNAGQSVTYYFTDVKAPTVTVGNQTIEVGKTMNPIVLTTTDNGTGTVTNTVTGLPSGLSYDSATNSIIGTPTKIGQSTVTVVSTDQANNKSTTTFTINVVDTTAPTVTPIGDQSSEVYSPISPIKIATQDNSGNAVTNKSTGLPSGLTFDSTNNTISGTPTNIGTSTITIVSTDASGNKTTTTFKYEVTRNSMSDSVSTSGSTQQSQSVSTSKADSQSASTSTSGSIVVSTSASTSKSTSVSLSDSVSASKSLSTSESNSVSSSTSTSLVNSQSVSSSMSDSASKSTSLSDSISNSSSTEKSESLSTSTSDSLRTSTSLSDSLSMSTSGSLSKSQSLSTSTSDSASTSQSVSDSTSNSISTAESLSESASTSDSISISNSIANSQSASTSKSDSQSTSISLSTSDSKSMSTSESLSDSTSTSDSVSGSLSVAGSQSVSTSTSDSMSTSEIVSDSISTSGSLSASDSKSMSVSSSMSTSQSGSTSESLSDSQSTSDSDSKSLSLSTSQSGSTSTSTSTSSSVRTSESQSTSGSMSTSQSDSTSISTSFSDPTSDSKSASTASSESISQSVSTSTSGSVSTSTSLSTSNSERTSTSMSDSTSLSTSESDSTSDSTSTSDSISEAISGSESTSISLSESNSTGDSESKSASAFLSESLSESTSESTSESLSGSTSDSTSLSDSNSESGSTSTSLSNSTSGSTSISTSTSGSASTSTVKSESVSTSLSTSTSTSLSDSTSLSTSLSDSTSGSKSNSLSASMSTSDSISTRKSESLSASTSLSGSTSESESGSTSSSASQSDSTSMSLSMSQSISGSTSTSTSTSLSDSTSTSLSLSASMNQSGVDSNSASQSASTSTSISTSESDSQSTSTYTSQSTSQSESTSTSTSISDSTSISKSTSQSGSTSTSASLSGSESESDSQSVSTSASESTSESASTSLSDSTSTSNSTSESTSNAISTSASASESDSSSTSLSDSTSASMQSSESDSQSTSTSLSNSQSTSTSIRMSTIVSESVSESTSESGSTSESTSESDSTSTSLSDSQSTSRSTSASGSASTSTSTSDSRSTSAPTSTSMRTSTLDSQSMSLSTSTSTSVSDSTSLSDSVSDSTSDSTSTSTSGSMSASISLSDSTSTSTSASEVMSASISDSQSMSESVNDSESVSESNSESDSKSMSGSTSVSDSGSLSVSTSLRKSESVSESSSLSGSQSMSDSVSTSDSSSLSVSMSLRSSESVSESDSLSDSKSTSGSTSTSTSGSLSTSLSGSESVSESTSLSDSISMSDSTSTSDSDSLSGSISLSGSTSLSTSDSLSDSKSLSSSQSMSGSESTSTSVSDSQSSSASNSQFDSMSISASESDSVSTSDSSSISGSNSTSTSLSTSDSMSGSVSVSTSTSLSDSISGSISVSDSSSTSTSESLSDSMAQSQSTSTSASGSLSTSISTSMSMSASTSTSQSTSVSTSLSTSDSISDSTSISISGSQSAVESESTSDSTSISDSESLSTSDSDSTSTSTSVSTSGSTSTSVSESLSTSGSGSTSVSDSTSMSESDSTSASMSQDKSDSTSISNSESVSTSTSTSLSTSDSTSTSESLSTSMSGSQSISDSTSTSMSNSTSMSNSTSTSMSGSTSTSESNSMHPSDSMSMHHTHSTSTSISTSEATTSTSDSQSTLSATSEATKHNGTRAQSEERLPDTGESIKQNGLLGGIMTLLVGLGLMKRKKKKDENDQDDSQA.

Positions 1–89 (MSKRQKAFHD…VNMLHDQQAF (89 aa)) are cleaved as a signal peptide. The tract at residues 90–230 (AASDAPLTSE…KTSTTSTSTA (141 aa)) is serine-rich repeat region 1, SRR1. A compositionally biased stretch (polar residues) spans 100–111 (LNTQSETVGNQN). Disordered regions lie at residues 100–230 (LNTQ…TSTA), 691–721 (NSGN…GTPT), and 751–2255 (NSMS…GLLG). Positions 112–128 (STTIEASTSTADSTSVT) are enriched in low complexity. Polar residues predominate over residues 129–140 (KNSSSVQTSNSD). Over residues 149–229 (NVTSTTNSTS…NKTSTTSTST (81 aa)) the composition is skewed to low complexity. Residues 231-751 (PVKLRTFSRL…TTFKYEVTRN (521 aa)) are non-repeat region (NRR). Low complexity-rich tracts occupy residues 752–1323 (SMSD…SDSI), 1330–1894 (SLSA…QSSS), and 1901–2225 (DSMS…SATS). The tract at residues 752–2244 (SMSDSVSTSG…AQSEERLPDT (1493 aa)) is serine-rich repeat region 2, SRR2. Positions 2241–2245 (LPDTG) match the LPXTG sorting signal motif. The residue at position 2244 (T2244) is a Pentaglycyl murein peptidoglycan amidated threonine. Residues 2245-2283 (GESIKQNGLLGGIMTLLVGLGLMKRKKKKDENDQDDSQA) constitute a propeptide, removed by sortase.

It belongs to the serine-rich repeat protein (SRRP) family. Proteolytically cleaved by a metalloprotease. Post-translationally, glycosylated. It is probable that most of the Ser residues in SSR1 and SSR2 are O-GlcNAcylated. Sequential glycosylation by sugar transferases are able to generate complex sugar polymorphisms.

The protein localises to the secreted. It localises to the cell wall. Functionally, mediates binding to human platelets, possibly through a receptor-ligand interaction. Probably associated with virulence in endovascular infection. This Staphylococcus aureus protein is Serine-rich adhesin for platelets (sraP).